The primary structure comprises 93 residues: Alpha-defensin 6/12 (93 aa).

The N-terminal stretch at 1-19 is a signal peptide; that stretch reads MKTLILLSALVLLAFQVQA. Positions 20-60 are excised as a propeptide; the sequence is DPIQNTDEETKTEEQPGEEDQAVSVSFGDPEGTSLQEESLR. A disordered region spans residues 23 to 54; sequence QNTDEETKTEEQPGEEDQAVSVSFGDPEGTSL. 3 cysteine pairs are disulfide-bonded: C64–C92, C66–C81, and C71–C91.

It belongs to the alpha-defensin family. In terms of tissue distribution, paneth cells of the small bowel.

Its subcellular location is the secreted. Has broad-spectrum antimicrobial properties. Has antibacterial activity against the Gram-positive bacterium L.monocytogenes EGD and the Gram-negative bacteria E.coli ML-35p and avirulent S.typhimurium 7953, but not against the mouse-virulent S.typhimurium 14028S. Probably contributes to the antimicrobial barrier function of the small bowel mucosa. This Mus musculus (Mouse) protein is Alpha-defensin 6/12 (Defa6).